The chain runs to 374 residues: MKFELDTTDGRARRGRLIFDRGTVETPAFMPVGTYGTVKGMTPEEVRATGADILLGNTFHLWLRPGEEIMRKHGDLHDFMNWQRPILTDSGGFQVFSLGDIRKITEEGVHFRSPINGEKIFLDPEKSMQIQDALGSDVVMIFDECTPYPATEDEARKSMQMSLRWARRSRDEFDRLENPNSLFGIIQGGVYEDLRDESLKGLVDIGFDGYAVGGLAVGEPKADMHRILEHICPQIPADKPRYLMGVGKPEDLVEGVRRGVDMFDCVMPTRNARNGHLFTSEGVIKIRNARHRDDTSPLDTKCDCYTCKNYSRAYLYHLDRCNEILGARLNTIHNLRYYQMLMEGLRGAIETGTLDAFVADFYTSQGREVPELVN.

Aspartate 89 (proton acceptor) is an active-site residue. Substrate is bound by residues 89–93, aspartate 143, glutamine 187, and glycine 214; that span reads DSGGF. An RNA binding region spans residues 245–251; the sequence is GVGKPED. Residue aspartate 264 is the Nucleophile of the active site. The tract at residues 269–273 is RNA binding; important for wobble base 34 recognition; it reads TRNAR. Positions 302, 304, 307, and 333 each coordinate Zn(2+).

It belongs to the queuine tRNA-ribosyltransferase family. As to quaternary structure, homodimer. Within each dimer, one monomer is responsible for RNA recognition and catalysis, while the other monomer binds to the replacement base PreQ1. Zn(2+) is required as a cofactor.

It catalyses the reaction 7-aminomethyl-7-carbaguanine + guanosine(34) in tRNA = 7-aminomethyl-7-carbaguanosine(34) in tRNA + guanine. Its pathway is tRNA modification; tRNA-queuosine biosynthesis. Its function is as follows. Catalyzes the base-exchange of a guanine (G) residue with the queuine precursor 7-aminomethyl-7-deazaguanine (PreQ1) at position 34 (anticodon wobble position) in tRNAs with GU(N) anticodons (tRNA-Asp, -Asn, -His and -Tyr). Catalysis occurs through a double-displacement mechanism. The nucleophile active site attacks the C1' of nucleotide 34 to detach the guanine base from the RNA, forming a covalent enzyme-RNA intermediate. The proton acceptor active site deprotonates the incoming PreQ1, allowing a nucleophilic attack on the C1' of the ribose to form the product. After dissociation, two additional enzymatic reactions on the tRNA convert PreQ1 to queuine (Q), resulting in the hypermodified nucleoside queuosine (7-(((4,5-cis-dihydroxy-2-cyclopenten-1-yl)amino)methyl)-7-deazaguanosine). In Shewanella baltica (strain OS185), this protein is Queuine tRNA-ribosyltransferase.